The sequence spans 340 residues: uncharacterized protein (340 aa).

The next 2 helical transmembrane spans lie at Pro-162–Gly-182 and Phe-239–Pro-259.

It localises to the cell membrane. This is an uncharacterized protein from Mycobacterium bovis (strain ATCC BAA-935 / AF2122/97).